Here is a 291-residue protein sequence, read N- to C-terminus: Ribosomal protein L11 methyltransferase (291 aa).

Residues Thr-136, Gly-159, Asp-181, and Asn-228 each coordinate S-adenosyl-L-methionine.

It belongs to the methyltransferase superfamily. PrmA family.

The protein resides in the cytoplasm. The enzyme catalyses L-lysyl-[protein] + 3 S-adenosyl-L-methionine = N(6),N(6),N(6)-trimethyl-L-lysyl-[protein] + 3 S-adenosyl-L-homocysteine + 3 H(+). In terms of biological role, methylates ribosomal protein L11. The protein is Ribosomal protein L11 methyltransferase of Rhizobium meliloti (strain 1021) (Ensifer meliloti).